We begin with the raw amino-acid sequence, 601 residues long: ATP-dependent lipid A-core flippase (601 aa).

4 helical membrane passes run 26-46 (VGLF…QPML), 82-102 (LMIV…NYFL), 167-187 (VFLF…MVAI), and 263-283 (VYTP…LFLV). The region spanning 30–321 (AVSILGYVIF…LSEVSSTIQR (292 aa)) is the ABC transmembrane type-1 domain. The ABC transporter domain maps to 353–589 (IEVRDLSFRY…GGHYARLHAM (237 aa)). 387–394 (GRSGSGKS) is a binding site for ATP.

Belongs to the ABC transporter superfamily. Lipid exporter (TC 3.A.1.106) family. As to quaternary structure, homodimer.

It is found in the cell inner membrane. The enzyme catalyses ATP + H2O + lipid A-core oligosaccharideSide 1 = ADP + phosphate + lipid A-core oligosaccharideSide 2.. Involved in lipopolysaccharide (LPS) biosynthesis. Translocates lipid A-core from the inner to the outer leaflet of the inner membrane. Transmembrane domains (TMD) form a pore in the inner membrane and the ATP-binding domain (NBD) is responsible for energy generation. In Aromatoleum aromaticum (strain DSM 19018 / LMG 30748 / EbN1) (Azoarcus sp. (strain EbN1)), this protein is ATP-dependent lipid A-core flippase.